Here is a 1286-residue protein sequence, read N- to C-terminus: ABC transporter B family member 1 (1286 aa).

A run of 2 helical transmembrane segments spans residues 42–62 (VLMGIGSVGAFVHGCSLPLFL) and 93–113 (FLVVGAAIWASSWAEISCWMW). The ABC transmembrane type-1 1 domain maps to 44–333 (MGIGSVGAFV…SAPSMAAFAK (290 aa)). Position 139 (Asp139) interacts with ATP. The next 2 helical transmembrane spans lie at 166–186 (LGNFIHYMATFVSGFIVGFTA) and 187–207 (VWQLALVTLAVVPLIAVIGGI). Asn217 is a glycosylation site (N-linked (GlcNAc...) asparagine). Transmembrane regions (helical) follow at residues 277-297 (ATYFVVFCCYALLLWYGGYLV) and 301-321 (LTNGGLAIATMFAVMIGGLAL). Tyr286 provides a ligand contact to brassinolide. The ABC transporter 1 domain occupies 368–604 (VELKNVDFSY…GENGVYAKLI (237 aa)). Tyr377, Ser379, Arg380, Gly408, Lys409, Ser410, and Thr411 together coordinate ATP. The tract at residues 614–647 (AMSNARKSSARPSSARNSVSSPIMTRNSSYGRSP) is disordered. Residues 616–635 (SNARKSSARPSSARNSVSSP) are compositionally biased toward low complexity. Residue Asn640 is glycosylated (N-linked (GlcNAc...) asparagine). An ABC transmembrane type-1 2 domain is found at 700-988 (ALLGSVGSVI…TLTLAPDFIK (289 aa)). 2 helical membrane passes run 705–725 (VGSVICGSLSAFFAYVLSAVL) and 745–765 (YLLIGLSSAALVFNTLQHSFW). The N-linked (GlcNAc...) asparagine glycan is linked to Asn771. Position 793 (Asp793) interacts with ATP. The N-linked (GlcNAc...) asparagine glycan is linked to Asn797. The next 4 membrane-spanning stretches (helical) occupy residues 821–843 (ISVIVQNTALMLVACTAGFVLQW), 845–867 (LALVLVAVFPVVVAATVLQKMFM), 932–952 (VAQFCLYASYALGLWYASWLV), and 967–987 (MVLMVSANGAAETLTLAPDFI). 2 residues coordinate brassinolide: Tyr941 and Glu978. Positions 1024-1260 (VELKHIDFSY…HPDGIYARMI (237 aa)) constitute an ABC transporter 2 domain. Residues Tyr1033, Arg1036, Gly1064, Lys1065, and Ser1066 each contribute to the ATP site. An interaction with FKBP42/TWD1 region spans residues 1049–1286 (ARAGKTLALV…SSSRVKEDDA (238 aa)).

Belongs to the ABC transporter superfamily. ABCB family. Multidrug resistance exporter (TC 3.A.1.201) subfamily. In terms of assembly, interacts with 1-naphthylphthalamic acid (NPA) and FKBP42/TWD1. In terms of tissue distribution, ubiquitous, with high levels in peduncles. Mostly localized in young developing tissues, including meristems, as well as root and shoot apices.

It is found in the cell membrane. It carries out the reaction (indol-3-yl)acetate(in) + ATP + H2O = (indol-3-yl)acetate(out) + ADP + phosphate + H(+). It catalyses the reaction brassinolide(in) + ATP + H2O = brassinolide(out) + ADP + phosphate + H(+). The enzyme catalyses 24-epi-brassinolide(in) + ATP + H2O = 24-epi-brassinolide(out) + ADP + phosphate + H(+). The catalysed reaction is 24-epi-castasterone(in) + ATP + H2O = 24-epi-castasterone(out) + ADP + phosphate + H(+). It carries out the reaction castasterone(in) + ATP + H2O = castasterone(out) + ADP + phosphate + H(+). With respect to regulation, transport capacity is stimulated by the chaperone protein FKBP42/TWD1. Transport activity inhibited by 1-N-naphthylphthalamic acid (NPA), cyclopropyl propane dione (CPD), cyclosporin A, verapamil and quercetin. ATPase activity is specifically activated by bioactive brassinosteroids in a dose-dependent manner, including brassinolide (BL), 24-epiBL, 24-epicastasterone (24-epiCS) and castasterone-alkyne; BL binding leads to structural changes. Inhibited by vanadate. Functionally, brassinosteroid exporter that, in conjunction with ABCB19, supports the accumulation of exogenous brassinosteroids (BR) in the apoplast, thus promoting BR signaling initiation involving the specific receptor BRI1 and required for plant growth and stress responses. Auxin efflux transporter that acts as a negative regulator of light signaling to promote hypocotyl elongation. May contribute to the regulation of leaf position and morphology during PHOT1-mediated blue light responses involving auxin distribution, especially in low light fluence. Together with ABCB19 and in a FKBP42/TWD1-dependent manner, supports seed development by promoting stamen elongation and, to a lesser extent, anther dehiscence and pollen maturation, probably as auxin transporters. Mediates the accumulation of chlorophyll and anthocyanin, as well as the expression of genes in response to light. Participates directly in auxin efflux and thus regulates the polar (presumably basipetal) auxin transport (from root tips to root elongating zone). Also transports some auxin metabolites such as oxindoleacetic acid and indoleacetaldehyde. Involved in diverse auxin-mediated responses including gravitropism, phototropism and lateral root formation. Confers resistance to herbicides such as dicamba, pendimethalin, oryzalin, and monosodium acid methanearsonate (MSMA), but not to herbicides such as glyphosate, atrazine, bentazon and fluazifop-p-butyl. Also mediates resistance to xenobiotics such as cycloheximide and the cytokinin N6-(2-isopentenyl)adenine (2IP). This chain is ABC transporter B family member 1, found in Arabidopsis thaliana (Mouse-ear cress).